We begin with the raw amino-acid sequence, 507 residues long: GMP synthase [glutamine-hydrolyzing] (507 aa).

The 190-residue stretch at 4–193 (KIIILDFGSQ…VVDVCGCKQD (190 aa)) folds into the Glutamine amidotransferase type-1 domain. Residue Cys-79 is the Nucleophile of the active site. Active-site residues include His-167 and Glu-169. The GMPS ATP-PPase domain maps to 194–382 (WSPASFIEST…LGMPEHLITR (189 aa)). 221 to 227 (SGGVDSS) contributes to the ATP binding site.

In terms of assembly, homodimer.

It catalyses the reaction XMP + L-glutamine + ATP + H2O = GMP + L-glutamate + AMP + diphosphate + 2 H(+). Its pathway is purine metabolism; GMP biosynthesis; GMP from XMP (L-Gln route): step 1/1. Catalyzes the synthesis of GMP from XMP. This Bacteroides fragilis (strain ATCC 25285 / DSM 2151 / CCUG 4856 / JCM 11019 / LMG 10263 / NCTC 9343 / Onslow / VPI 2553 / EN-2) protein is GMP synthase [glutamine-hydrolyzing].